A 1190-amino-acid polypeptide reads, in one-letter code: JNK-interacting protein (1190 aa).

Residues 1–35 are disordered; that stretch reads MACNLSPVNEMADSITSSTPSEIVYGGPGSPDEHR. Positions 24-112 constitute an RH1 domain; it reads VYGGPGSPDE…QTQYEREKAL (89 aa). The stretch at 78–165 forms a coiled coil; the sequence is LDLAYLERDE…TDHASRLEER (88 aa). The tract at residues 263-364 is disordered; sequence DEFSSDIEPS…DDTSDDGSLG (102 aa). Polar residues predominate over residues 277 to 292; it reads PQSSADALTSPITTKE. Positions 383 to 491 form a coiled coil; the sequence is KNALNIVKND…EESIKWTEMQ (109 aa). One can recognise an RH2 domain in the interval 456 to 542; it reads RKRFTRSEMQ…RASSSRGKMT (87 aa). The segment at 775-829 is disordered; the sequence is EDGVPTYCSNDMKPSPKRTRDFSISEVAPVDSSAPVKEDPLPPPANRPGGRAALP.

It belongs to the JIP scaffold family. As to expression, expressed in neurons of the ventral cord, retrovesicular and preanal ganglia and nerve ring, intestinal cells, seam and hypodermal cells, body wall, head muscle and pharynx.

Its subcellular location is the cytoplasm. The protein resides in the perinuclear region. In terms of biological role, the JNK-interacting protein (JIP) group of scaffold proteins selectively mediates JNK signaling by aggregating specific components of the MAPK cascade to form a functional JNK signaling module. May function as a regulator of synaptic vesicle transport, through interactions with the JNK-signaling components and motor proteins. Binds specific components of the JNK signaling pathway namely jnk-1, jkk-1 and sek-1. Associates with components of the motor protein, kinesin-1. Pre-assembled unc-16 scaffolding complexes are then transported as a cargo of kinesin, to the required subcellular location. Regulates the retrograde transport of autophagosomes from the neurites to the cell body of AIY interneurons. The polypeptide is JNK-interacting protein (Caenorhabditis elegans).